The following is a 249-amino-acid chain: Ditrans,polycis-undecaprenyl-diphosphate synthase ((2E,6E)-farnesyl-diphosphate specific) (249 aa).

Aspartate 29 is an active-site residue. Aspartate 29 provides a ligand contact to Mg(2+). Substrate-binding positions include 30–33, tryptophan 34, arginine 42, histidine 46, and 74–76; these read GNGR and STE. The active-site Proton acceptor is the asparagine 77. Substrate is bound by residues tryptophan 78, arginine 80, arginine 197, and 203-205; that span reads RLS. Residue glutamate 216 coordinates Mg(2+).

It belongs to the UPP synthase family. In terms of assembly, homodimer. It depends on Mg(2+) as a cofactor.

The enzyme catalyses 8 isopentenyl diphosphate + (2E,6E)-farnesyl diphosphate = di-trans,octa-cis-undecaprenyl diphosphate + 8 diphosphate. Generates ditrans,octacis-undecaprenyl pyrophosphate (UPP) from isopentenyl pyrophosphate (IPP) and farnesyl diphosphate. UPP is the precursor of glycosyl carrier lipid in the biosynthesis of bacterial cell wall polysaccharide components such as peptidoglycan and lipopolysaccharide. The polypeptide is Ditrans,polycis-undecaprenyl-diphosphate synthase ((2E,6E)-farnesyl-diphosphate specific) (uppS) (Micrococcus luteus (Micrococcus lysodeikticus)).